We begin with the raw amino-acid sequence, 126 residues long: Probable V-type proton ATPase subunit G (126 aa).

Belongs to the V-ATPase G subunit family. In terms of assembly, V-ATPase is a heteromultimeric enzyme made up of two complexes: the ATP-hydrolytic V1 complex and the proton translocation V0 complex. The V1 complex consists of three catalytic AB heterodimers that form a heterohexamer, three peripheral stalks each consisting of EG heterodimers, one central rotor including subunits D and F, and the regulatory subunits C and H. The proton translocation complex V0 consists of the proton transport subunit a, a ring of proteolipid subunits c9c'', rotary subunit d, subunits e and f, and the accessory subunits vah-19/Ac45 and vah-20/PRR. Interacts with ced-1.

In terms of biological role, subunit of the V1 complex of vacuolar(H+)-ATPase (V-ATPase), a multisubunit enzyme composed of a peripheral complex (V1) that hydrolyzes ATP and a membrane integral complex (V0) that translocates protons. V-ATPase is responsible for acidifying and maintaining the pH of intracellular compartments and in some cell types, is targeted to the plasma membrane, where it is responsible for acidifying the extracellular environment. In neurons, required for necrotic cell death by promoting intracellular acidification. In Caenorhabditis elegans, this protein is Probable V-type proton ATPase subunit G.